The chain runs to 441 residues: Membrane-bound protease PH1510 (441 aa).

A signal peptide spans 1-20; that stretch reads MRRILLSMIVLIFLASPILA. Residue 64-67 coordinates substrate; it reads GGRA. Residue S97 is the Nucleophile of the active site. Residue 119-124 participates in substrate binding; sequence ACRPIL. K138 acts as the Proton donor/acceptor in catalysis. The next 4 membrane-spanning stretches (helical) occupy residues 239–259, 271–291, 307–327, and 344–364; these read VAYL…LTPG, IILA…ILLI, FGLF…LLFG, and ILII…MAAV.

This sequence belongs to the peptidase S14 family. Homodimer.

Its subcellular location is the membrane. With respect to regulation, inhibited by divalent metal cations, including Mg(2+), Mn(2+), Ca(2+) and Zn(2+). Mildly inhibited by 0.01 % SDS and 0.1% dodecyl-beta-D-maltoside. Activity is nearly abolished by 1 % SDS. Protease that cleaves its substrates preferentially near hydrophobic or aromatic amino acid residues. Can degrade casein and the stomatin homolog PH1511 (in vitro). In Pyrococcus horikoshii (strain ATCC 700860 / DSM 12428 / JCM 9974 / NBRC 100139 / OT-3), this protein is Membrane-bound protease PH1510.